Here is a 374-residue protein sequence, read N- to C-terminus: Transcription factor IIIA (374 aa).

7 C2H2-type zinc fingers span residues 23–47, 53–77, 83–107, 113–138, 144–169, 204–226, and 236–261; these read FHCPYEECGKKYSRPSLLEQHLRTH, FVCDYTGCSKAFYRKSHLKIHKRCH, FSCHYDGCDAQFYTQQHLERHIEVH, YACTWEGCDECFSKHQQLRSHISACH, YPCTYQDCELRFATKQKLQNHVNRAH, PSCSICGRQFKTAAHLRHHVVLH, and YHCPMEGCKKSFTRSSALKKHISVIH. Residues 267 to 291 form a C2H2-type 8; atypical zinc finger; it reads FHCDSCGTKFGYKHMLQRHLERGTC. The segment at 349-374 adopts a C2H2-type 9 zinc-finger fold; the sequence is YSCSFPECNYRFKRLYDMHRHLNSHH.

The protein resides in the nucleus. Its function is as follows. Is required for correct transcription of 5S RNA genes by RNA polymerase III. Also binds the transcribed 5S RNA's. Initiates transcription of the 5S ribosomal RNA gene. The chain is Transcription factor IIIA (sfc2) from Schizosaccharomyces pombe (strain 972 / ATCC 24843) (Fission yeast).